A 490-amino-acid polypeptide reads, in one-letter code: GTPase Der (490 aa).

EngA-type G domains are found at residues 3 to 166 and 203 to 376; these read PVVA…VDEI and IKLA…DSST. GTP is bound by residues 9-16, 56-60, 118-121, 209-216, 256-260, and 321-324; these read GRPNVGKS, DTGGI, NKTD, DTAGV, and NKWD. The region spanning 377–461 is the KH-like domain; it reads RRQSTAMLTR…PIRIQFKEGE (85 aa).

The protein belongs to the TRAFAC class TrmE-Era-EngA-EngB-Septin-like GTPase superfamily. EngA (Der) GTPase family. Associates with the 50S ribosomal subunit.

GTPase that plays an essential role in the late steps of ribosome biogenesis. This Enterobacter sp. (strain 638) protein is GTPase Der.